A 514-amino-acid polypeptide reads, in one-letter code: Probable cytochrome P450 6w1 (514 aa).

Cysteine 450 is a binding site for heme.

It belongs to the cytochrome P450 family. It depends on heme as a cofactor.

The protein localises to the endoplasmic reticulum membrane. The protein resides in the microsome membrane. May be involved in the metabolism of insect hormones and in the breakdown of synthetic insecticides. The protein is Probable cytochrome P450 6w1 (Cyp6w1) of Drosophila melanogaster (Fruit fly).